The following is a 611-amino-acid chain: Aspartate--tRNA(Asp/Asn) ligase (611 aa).

Position 177 (E177) interacts with L-aspartate. Residues 201–204 (QLFK) are aspartate. R223 serves as a coordination point for L-aspartate. Residues 223 to 225 (RDE) and Q232 contribute to the ATP site. H461 contacts L-aspartate. E499 contacts ATP. An L-aspartate-binding site is contributed by R506. Residue 551 to 554 (GVDR) participates in ATP binding.

It belongs to the class-II aminoacyl-tRNA synthetase family. Type 1 subfamily. As to quaternary structure, homodimer.

It localises to the cytoplasm. It carries out the reaction tRNA(Asx) + L-aspartate + ATP = L-aspartyl-tRNA(Asx) + AMP + diphosphate. In terms of biological role, aspartyl-tRNA synthetase with relaxed tRNA specificity since it is able to aspartylate not only its cognate tRNA(Asp) but also tRNA(Asn). Reaction proceeds in two steps: L-aspartate is first activated by ATP to form Asp-AMP and then transferred to the acceptor end of tRNA(Asp/Asn). This chain is Aspartate--tRNA(Asp/Asn) ligase, found in Synechococcus sp. (strain WH7803).